We begin with the raw amino-acid sequence, 330 residues long: MSGTMPLQPTFYGFIGDTTDALIIFEACLSGKLFHVPRRPHDRERQDLIKSGNIFVYEEHASGIKRWTDSISWSPSRILGNYLLYRELEKPFPPGEKKRARGRNGKSTTQSGGITKSRPRNSVPFQTGLEHGNEYTTVPSDDERHLVGSLVDSYDFKEQGLVKKTISITYQGVPHHLVSYYHVEDVKAGLLPSPVDDPRLRGVVPRTELLTGQNFRAPIEEAQHGTYLSGAYMPNMDHQYAPIGFPTHTQQPALQQQPQQQPQPQHQPQLQYQPQPHQHQPQLQYQPQQQHQPQQQYRPQPQHQPQLQYQPQALHPTAHGYPQSYGQTWW.

2 disordered regions span residues 93-123 (PPGE…RNSV) and 239-306 (QYAP…HQPQ). Residues 105–114 (GKSTTQSGGI) are compositionally biased toward polar residues. The segment covering 250–306 (QQPALQQQPQQQPQPQHQPQLQYQPQPHQHQPQLQYQPQQQHQPQQQYRPQPQHQPQ) has biased composition (low complexity).

The protein belongs to the MIT1/WOR1 family.

Its subcellular location is the nucleus. Its function is as follows. Global transcriptional regulator of pathogenicity. Acts as an activator of parasitic growth. Not essential for colonization or penetration of the root surface, but required for expression of genes encoding effectors that are secreted during infection. Involved in conidiogenesis, but is not required for conidial fitness, overall (colony) morphology, vegetative growth or carbon source utilization. The chain is Global transcription regulator sge1 from Fusarium oxysporum f. sp. lycopersici (strain 4287 / CBS 123668 / FGSC 9935 / NRRL 34936) (Fusarium vascular wilt of tomato).